Reading from the N-terminus, the 158-residue chain is Non-secretory ribonuclease (158 aa).

The N-terminal stretch at 1–27 is a signal peptide; sequence MVPKLFTSQICLLPLLGLLSAEGSPHA. H42 (proton acceptor) is an active-site residue. Y60 is modified (3'-nitrotyrosine). 65–69 contacts substrate; that stretch reads KNKNT. 3 N-linked (GlcNAc...) asparagine glycosylation sites follow: N86, N92, and N111. H153 serves as the catalytic Proton donor.

The protein belongs to the pancreatic ribonuclease family. As to quaternary structure, interacts with and forms a tight 1:1 complex with RNH1. Dimerization of two such complexes may occur.

It is found in the lysosome. Its subcellular location is the cytoplasmic granule. It carries out the reaction an [RNA] containing cytidine + H2O = an [RNA]-3'-cytidine-3'-phosphate + a 5'-hydroxy-ribonucleotide-3'-[RNA].. It catalyses the reaction an [RNA] containing uridine + H2O = an [RNA]-3'-uridine-3'-phosphate + a 5'-hydroxy-ribonucleotide-3'-[RNA].. Functionally, this is a non-secretory ribonuclease. It is a pyrimidine specific nuclease with a slight preference for U. Cytotoxin and helminthotoxin. Possesses a wide variety of biological activities. This chain is Non-secretory ribonuclease (RNASE2), found in Callithrix jacchus (White-tufted-ear marmoset).